The following is a 133-amino-acid chain: Ubiquitin-like FUBI-ribosomal protein eS30 fusion protein (133 aa).

Residues 1-74 (MQLFVRAQEL…LEVAGRMLGG (74 aa)) enclose the Ubiquitin-like domain. The disordered stretch occupies residues 84–110 (GKVRGQTPKVAKQEKKKKKTGRAKRRM). Residues 97-110 (EKKKKKTGRAKRRM) are compositionally biased toward basic residues. Lys125 is modified (N6-succinyllysine).

In the N-terminal section; belongs to the ubiquitin family. This sequence in the C-terminal section; belongs to the eukaryotic ribosomal protein eS30 family. Component of the 40S subunit of the ribosome. FUBI is cleaved from ribosomal protein S30 by the deubiquitinase USP36 before the assembly of ribosomal protein S30 into pre-40S ribosomal particles. FUBI removal from ribosomal protein S30 is a crucial event for the final maturation of pre-40S particles.

The protein resides in the cytoplasm. It is found in the nucleus. Its function is as follows. May have pro-apoptotic activity. Component of the 40S subunit of the ribosome. Contributes to the assembly and function of 40S ribosomal subunits. This is Ubiquitin-like FUBI-ribosomal protein eS30 fusion protein from Homo sapiens (Human).